Reading from the N-terminus, the 388-residue chain is Chorismate synthase (388 aa).

NADP(+) contacts are provided by Arg-39 and Arg-45. Residues 130-132 (RSS), 251-252 (NA), Gly-296, 311-315 (KPIPT), and Arg-337 contribute to the FMN site.

It belongs to the chorismate synthase family. Homotetramer. FMNH2 is required as a cofactor.

The catalysed reaction is 5-O-(1-carboxyvinyl)-3-phosphoshikimate = chorismate + phosphate. The protein operates within metabolic intermediate biosynthesis; chorismate biosynthesis; chorismate from D-erythrose 4-phosphate and phosphoenolpyruvate: step 7/7. Catalyzes the anti-1,4-elimination of the C-3 phosphate and the C-6 proR hydrogen from 5-enolpyruvylshikimate-3-phosphate (EPSP) to yield chorismate, which is the branch point compound that serves as the starting substrate for the three terminal pathways of aromatic amino acid biosynthesis. This reaction introduces a second double bond into the aromatic ring system. This Geobacillus kaustophilus (strain HTA426) protein is Chorismate synthase.